The sequence spans 114 residues: Immunomodulatory protein FIP-Fve (114 aa).

The residue at position 1 (Ser1) is an N-acetylserine.

Belongs to the fungal immunomodulatory protein (FIP) family. Homodimer.

Functionally, lectin with specificity for complex cell-surface carbohydrates. Possesses immunomodulatory activity, stimulates lymphocyte mitogenesis, suppresses systemic anaphylaxis reactions and edema, enhances transcription of IL-2, IFN-gamma and TNF-alpha and hemagglutinates red blood cells. In Flammulina velutipes (Agaricus velutipes), this protein is Immunomodulatory protein FIP-Fve.